Consider the following 98-residue polypeptide: Integration host factor subunit beta (98 aa).

Belongs to the bacterial histone-like protein family. As to quaternary structure, heterodimer of an alpha and a beta chain.

Functionally, this protein is one of the two subunits of integration host factor, a specific DNA-binding protein that functions in genetic recombination as well as in transcriptional and translational control. The chain is Integration host factor subunit beta from Gluconacetobacter diazotrophicus (strain ATCC 49037 / DSM 5601 / CCUG 37298 / CIP 103539 / LMG 7603 / PAl5).